The primary structure comprises 187 residues: GTP cyclohydrolase 1 1 (187 aa).

The protein belongs to the GTP cyclohydrolase I family. Homomer.

It catalyses the reaction GTP + H2O = 7,8-dihydroneopterin 3'-triphosphate + formate + H(+). Its pathway is cofactor biosynthesis; 7,8-dihydroneopterin triphosphate biosynthesis; 7,8-dihydroneopterin triphosphate from GTP: step 1/1. This chain is GTP cyclohydrolase 1 1, found in Pseudomonas syringae pv. tomato (strain ATCC BAA-871 / DC3000).